The following is a 372-amino-acid chain: Cyclin-dependent kinase 9 (372 aa).

In terms of domain architecture, Protein kinase spans 19–315; sequence YEKLAKIGQG…SDDALNHDFF (297 aa). Residue 25–33 participates in ATP binding; that stretch reads IGQGTFGEV. An N6-acetyllysine; by EP300/CBP, PCAF/KAT2B and GCN5/KAT2A modification is found at lysine 44. ATP contacts are provided by residues lysine 48 and 104 to 106; that span reads DFC. N6-acetyllysine; by PCAF/KAT2B and GCN5/KAT2A is present on lysine 48. Aspartate 149 acts as the Proton acceptor in catalysis. The interval 166 to 191 is T-loop; sequence ADFGLARAFSLAKNSQPNRYTNRVVT. An ATP-binding site is contributed by aspartate 167. The residue at position 175 (serine 175) is a Phosphoserine. Threonine 186 carries the post-translational modification Phosphothreonine; by CaMK1D. The interval 343 to 372 is disordered; sequence RRKGSQITQQSTNQSRNPATTNQTEFERVF. Position 347 is a phosphoserine; by CDK9 and PKA (serine 347). Residues 347-366 are compositionally biased toward polar residues; the sequence is SQITQQSTNQSRNPATTNQT. Phosphothreonine; by CDK9 is present on threonine 350. Position 353 is a phosphoserine; by CDK9 (serine 353). Threonine 354 carries the post-translational modification Phosphothreonine; by CDK9. Residue serine 357 is modified to Phosphoserine; by CDK9. Residues threonine 362 and threonine 363 each carry the phosphothreonine; by CDK9 modification.

The protein belongs to the protein kinase superfamily. CMGC Ser/Thr protein kinase family. CDC2/CDKX subfamily. Component of the super elongation complex (SEC), at least composed of EAF1, EAF2, CDK9, MLLT3/AF9, AFF (AFF1 or AFF4), the P-TEFb complex and ELL (ELL, ELL2 or ELL3). Associates with CCNT1/cyclin-T1, CCNT2/cyclin-T2 (isoform A and isoform B) or CCNK/cyclin-K to form active P-TEFb. P-TEFb forms a complex with AFF4/AF5Q31 and is part of the super elongation complex (SEC). Component of a complex which is composed of at least 5 members: HTATSF1/Tat-SF1, P-TEFb complex, RNA pol II, SUPT5H, and NCL/nucleolin. Associates with UBR5 and forms a transcription regulatory complex composed of CDK9, RNAP II, UBR5 and TFIIS/TCEA1 that can stimulate target gene transcription (e.g. gamma fibrinogen/FGG) by recruiting their promoters. Component of the 7SK snRNP inactive complex which is composed of at least 8 members: P-TEFb (composed of CDK9 and CCNT1/cyclin-T1), HEXIM1, HEXIM2, LARP7, BCDIN3, SART3 proteins and 7SK and U6 snRNAs. This inactive 7SK snRNP complex can also interact with NCOR1 and HDAC3, probably to regulate CDK9 acetylation. Release of P-TEFb from P-TEFb/7SK snRNP complex requires both PP2B to transduce calcium Ca(2+) signaling in response to stimuli (e.g. UV or hexamethylene bisacetamide (HMBA)), and PPP1CA to dephosphorylate Thr-186. This released P-TEFb remains inactive in the pre-initiation complex with BRD4 until new Thr-186 phosphorylation occurs after the synthesis of a short RNA. Interacts with BRD4; to target chromatin binding. Interacts with JMJD6. Interacts with activated nuclear STAT3 and RELA/p65. Binds to AR and MYOD1. Forms a complex composed of CDK9, CCNT1/cyclin-T1, EP300 and GATA4 that stimulates hypertrophy in cardiomyocytes. The large PER complex involved in the repression of transcriptional termination is composed of at least PER2, CDK9, DDX5, DHX9, NCBP1 and POLR2A. Interacts with HSF1. Interacts with TBX21. Interacts with WDR43. Interacts with ZMYND8; the association appears to occur between homodimeric ZMYND8 and the activated form of the P-TEFb complex. In terms of processing, autophosphorylation at Thr-186, Ser-347, Thr-350, Ser-353, Thr-354 and Ser-357 triggers kinase activity by promoting cyclin and substrate binding upon conformational changes. Thr-186 phosphorylation requires the calcium Ca(2+) signaling pathway, including CaMK1D and calmodulin. This inhibition is relieved by Thr-29 dephosphorylation. Phosphorylation at Ser-175 inhibits kinase activity. Can be phosphorylated on either Thr-362 or Thr-363 but not on both simultaneously. Post-translationally, dephosphorylation of Thr-186 by PPM1A and PPM1B blocks CDK9 activity and may lead to CDK9 proteasomal degradation. However, PPP1CA-mediated Thr-186 dephosphorylation is required to release P-TEFb from its inactive P-TEFb/7SK snRNP complex. Dephosphorylated at Ser-347 by the PNUTS-PP1 complex during RNA polymerase II transcription pause-release. Dephosphorylation of C-terminus Thr and Ser residues by protein phosphatase-1 (PP1) triggers CDK9 activity. N6-acetylation of Lys-44 promotes kinase activity, whereas acetylation of both Lys-44 and Lys-48 mediated by PCAF/KAT2B and GCN5/KAT2A reduces kinase activity. The acetylated form associates with PML bodies in the nuclear matrix and with the transcriptionally silent HIV-1 genome; deacetylated upon transcription stimulation. Deacetylated by SIRT7, promoting the kinase activity and subsequent 'Ser-2' phosphorylation of the C-terminal domain (CTD) of RNA polymerase II. In terms of processing, polyubiquitinated and thus activated by UBR5. This ubiquitination is promoted by TFIIS/TCEA1 and favors 'Ser-2' phosphorylation of RPB1/POLR2A CTD.

It localises to the nucleus. Its subcellular location is the cytoplasm. The protein resides in the PML body. It catalyses the reaction L-seryl-[protein] + ATP = O-phospho-L-seryl-[protein] + ADP + H(+). It carries out the reaction L-threonyl-[protein] + ATP = O-phospho-L-threonyl-[protein] + ADP + H(+). The enzyme catalyses [DNA-directed RNA polymerase] + ATP = phospho-[DNA-directed RNA polymerase] + ADP + H(+). Its activity is regulated as follows. Activation by Thr-186 phosphorylation is calcium Ca(2+) signaling pathway-dependent; actively inactivated by dephosphorylation mediated by PPP1CA, PPM1A and PPM1B. Reversibly repressed by acetylation at Lys-44 and Lys-48. Functionally, protein kinase involved in the regulation of transcription. Member of the cyclin-dependent kinase pair (CDK9/cyclin-T) complex, also called positive transcription elongation factor b (P-TEFb), which facilitates the transition from abortive to productive elongation by phosphorylating the CTD (C-terminal domain) of the large subunit of RNA polymerase II (RNAP II) POLR2A, SUPT5H and RDBP. This complex is inactive when in the 7SK snRNP complex form. Phosphorylates EP300, MYOD1, RPB1/POLR2A and AR and the negative elongation factors DSIF and NELFE. Regulates cytokine inducible transcription networks by facilitating promoter recognition of target transcription factors (e.g. TNF-inducible RELA/p65 activation and IL-6-inducible STAT3 signaling). Promotes RNA synthesis in genetic programs for cell growth, differentiation and viral pathogenesis. P-TEFb is also involved in cotranscriptional histone modification, mRNA processing and mRNA export. Modulates a complex network of chromatin modifications including histone H2B monoubiquitination (H2Bub1), H3 lysine 4 trimethylation (H3K4me3) and H3K36me3; integrates phosphorylation during transcription with chromatin modifications to control co-transcriptional histone mRNA processing. The CDK9/cyclin-K complex has also a kinase activity towards CTD of RNAP II and can substitute for CDK9/cyclin-T P-TEFb in vitro. Replication stress response protein; the CDK9/cyclin-K complex is required for genome integrity maintenance, by promoting cell cycle recovery from replication arrest and limiting single-stranded DNA amount in response to replication stress, thus reducing the breakdown of stalled replication forks and avoiding DNA damage. In addition, probable function in DNA repair of isoform 2 via interaction with KU70/XRCC6. Promotes cardiac myocyte enlargement. RPB1/POLR2A phosphorylation on 'Ser-2' in CTD activates transcription. AR phosphorylation modulates AR transcription factor promoter selectivity and cell growth. DSIF and NELF phosphorylation promotes transcription by inhibiting their negative effect. The phosphorylation of MYOD1 enhances its transcriptional activity and thus promotes muscle differentiation. Catalyzes phosphorylation of KAT5, promoting KAT5 recruitment to chromatin and histone acetyltransferase activity. The protein is Cyclin-dependent kinase 9 (CDK9) of Bos taurus (Bovine).